Consider the following 279-residue polypeptide: MKSAAAFATFLTLSVFVATTEVQGTPGLRGLRSLADNQSTESSEGRKDHYNHHRHVKKVIKKVKKIAIPVPVAVPQYIPVPISGPSSVIASQNTAVVGSSNNVVAASGAGAVGSGVLGPGGVTPAPTTMTGRPVATPAPTTSVPSSLVNTDTSDNQLPTTPVAASQGGGIGSNLAGGSGNSVSMSGFGGGNQMGTFGNSMFGGRGANTGNGFNGNGNNSFGQQMGIDTPNGNMFGGFGRQGAAGGGGQRGFGGEAPDGINSVASGNALGGGITRRRRRL.

A signal peptide spans 1–19; sequence MKSAAAFATFLTLSVFVAT. Positions 29-46 match the RxLR-dEER motif; the sequence is RGLRSLADNQSTESSEGR. 2 disordered regions span residues 29–53 and 135–176; these read RGLR…YNHH and ATPA…NLAG. N37 carries N-linked (GlcNAc...) asparagine glycosylation. Over residues 135-146 the composition is skewed to low complexity; the sequence is ATPAPTTSVPSS. Polar residues predominate over residues 147-163; that stretch reads LVNTDTSDNQLPTTPVA. Residues 166–176 are compositionally biased toward gly residues; the sequence is QGGGIGSNLAG. Residue N217 is glycosylated (N-linked (GlcNAc...) asparagine).

This sequence belongs to the RxLR effector family.

It is found in the secreted. Its subcellular location is the host cell membrane. Secreted effector that completely suppresses the host cell death induced by cell death-inducing proteins. This Plasmopara viticola (Downy mildew of grapevine) protein is Secreted RxLR effector protein 90.